We begin with the raw amino-acid sequence, 333 residues long: Tetraacyldisaccharide 4'-kinase (333 aa).

55–62 (TIGGNGKT) serves as a coordination point for ATP.

Belongs to the LpxK family.

It catalyses the reaction a lipid A disaccharide + ATP = a lipid IVA + ADP + H(+). The protein operates within glycolipid biosynthesis; lipid IV(A) biosynthesis; lipid IV(A) from (3R)-3-hydroxytetradecanoyl-[acyl-carrier-protein] and UDP-N-acetyl-alpha-D-glucosamine: step 6/6. In terms of biological role, transfers the gamma-phosphate of ATP to the 4'-position of a tetraacyldisaccharide 1-phosphate intermediate (termed DS-1-P) to form tetraacyldisaccharide 1,4'-bis-phosphate (lipid IVA). This chain is Tetraacyldisaccharide 4'-kinase, found in Blochmanniella floridana.